A 1099-amino-acid polypeptide reads, in one-letter code: Protein DDB_G0287365 (1099 aa).

The signal sequence occupies residues 1–24 (MMSFNLILILIIFLILIQNYVIDG). Residues 47 to 174 (KSWKKLKLPI…TKTTWTKLIS (128 aa)) enclose the G8 domain. N-linked (GlcNAc...) asparagine glycans are attached at residues asparagine 62, asparagine 137, asparagine 664, asparagine 764, and asparagine 858.

It belongs to the CEMIP family.

The sequence is that of Protein DDB_G0287365 from Dictyostelium discoideum (Social amoeba).